The primary structure comprises 530 residues: Protein SLOW WALKER 1 (530 aa).

7 WD repeats span residues 50-89 (NLVS…SSRR), 91-130 (SFRD…ALRT), 133-173 (SHSA…VISD), 176-216 (GHKD…SNWI), 220-258 (NHGL…KMVC), 262-304 (SHNK…VTYS), and 320-363 (GSTR…DESR). The Nuclear localization signal signature appears at 392-399 (EKKGLKLT).

In terms of tissue distribution, expressed in cells undergoing active cell divisions, including functional megaspores and the female gametophytic cells. Accumulates in roots, stems, leaves, inflorescences and siliques.

The protein resides in the nucleus. Its subcellular location is the nucleolus. Functionally, essential protein required for nuclear division and organization during embryo sac development in female gametophyte, probably by promoting rRNA biogenesis essential for the progression of the mitotic division cycles during gametogenesis. Involved in nucleolar processing of pre-18S ribosomal RNA. In Arabidopsis thaliana (Mouse-ear cress), this protein is Protein SLOW WALKER 1.